Consider the following 420-residue polypeptide: Glucose-1-phosphate adenylyltransferase (420 aa).

Residues Tyr-107, Gly-172, 187–188 (EK), and Ser-205 contribute to the alpha-D-glucose 1-phosphate site.

The protein belongs to the bacterial/plant glucose-1-phosphate adenylyltransferase family. In terms of assembly, homotetramer.

The enzyme catalyses alpha-D-glucose 1-phosphate + ATP + H(+) = ADP-alpha-D-glucose + diphosphate. Its pathway is glycan biosynthesis; glycogen biosynthesis. Its function is as follows. Involved in the biosynthesis of ADP-glucose, a building block required for the elongation reactions to produce glycogen. Catalyzes the reaction between ATP and alpha-D-glucose 1-phosphate (G1P) to produce pyrophosphate and ADP-Glc. In Rhizobium rhizogenes (strain K84 / ATCC BAA-868) (Agrobacterium radiobacter), this protein is Glucose-1-phosphate adenylyltransferase.